A 150-amino-acid polypeptide reads, in one-letter code: Large ribosomal subunit protein bL9 (150 aa).

Belongs to the bacterial ribosomal protein bL9 family.

In terms of biological role, binds to the 23S rRNA. This Renibacterium salmoninarum (strain ATCC 33209 / DSM 20767 / JCM 11484 / NBRC 15589 / NCIMB 2235) protein is Large ribosomal subunit protein bL9.